Consider the following 288-residue polypeptide: MDKIIKSISKNGHFRAFALDSTLTVREAQERHQTWPTSTVALGRTLIAAQILGANEKGDTKITVKVLGDGAMGPIIAVADSKGHVKGYVKNRELDYKKASTGEVLVAPFVGNGFLVVVKDMGLKQPYSGQVDLITGEIGEDLAWYFLSSEQTPSSVGVNVLLNEDSDTVKIAGGFMLQALPDATDEEITEIEHNIKSMPSIATMLTRDEPLKTMLDNIYGDMEYKNLGEFPLAFKCDCSKERFLEGIKSLGRQPIEEMIAEDHGAEIICQFCENKYEYSEEELKALIN.

2 disulfide bridges follow: cysteine 236/cysteine 238 and cysteine 269/cysteine 272.

It belongs to the HSP33 family. Post-translationally, under oxidizing conditions two disulfide bonds are formed involving the reactive cysteines. Under reducing conditions zinc is bound to the reactive cysteines and the protein is inactive.

The protein localises to the cytoplasm. Its function is as follows. Redox regulated molecular chaperone. Protects both thermally unfolding and oxidatively damaged proteins from irreversible aggregation. Plays an important role in the bacterial defense system toward oxidative stress. The protein is 33 kDa chaperonin of Lactococcus lactis subsp. cremoris (strain MG1363).